The following is a 381-amino-acid chain: Deoxyguanosinetriphosphate triphosphohydrolase-like protein (381 aa).

The 128-residue stretch at 76-203 folds into the HD domain; the sequence is RMTHTLEVAG…ADLSDEIAYT (128 aa).

This sequence belongs to the dGTPase family. Type 2 subfamily.

This is Deoxyguanosinetriphosphate triphosphohydrolase-like protein from Leptospira borgpetersenii serovar Hardjo-bovis (strain JB197).